The chain runs to 682 residues: Elongation factor G (682 aa).

The 275-residue stretch at 8 to 282 folds into the tr-type G domain; sequence QKFRNFGIMA…AVVDYLPSPV (275 aa). GTP contacts are provided by residues 17-24, 81-85, and 135-138; these read AHIDAGKT, DTPGH, and NKMD.

Belongs to the TRAFAC class translation factor GTPase superfamily. Classic translation factor GTPase family. EF-G/EF-2 subfamily.

It localises to the cytoplasm. In terms of biological role, catalyzes the GTP-dependent ribosomal translocation step during translation elongation. During this step, the ribosome changes from the pre-translocational (PRE) to the post-translocational (POST) state as the newly formed A-site-bound peptidyl-tRNA and P-site-bound deacylated tRNA move to the P and E sites, respectively. Catalyzes the coordinated movement of the two tRNA molecules, the mRNA and conformational changes in the ribosome. This chain is Elongation factor G, found in Malacoplasma penetrans (strain HF-2) (Mycoplasma penetrans).